The sequence spans 880 residues: Protein translocase subunit SecA (880 aa).

Residues Q87, 105 to 109, and D501 contribute to the ATP site; that span reads GEGKT. Zn(2+)-binding residues include C864, C866, C875, and H876.

This sequence belongs to the SecA family. As to quaternary structure, monomer and homodimer. Part of the essential Sec protein translocation apparatus which comprises SecA, SecYEG and auxiliary proteins SecDF-YajC and YidC. The cofactor is Zn(2+).

The protein localises to the cell inner membrane. It localises to the cytoplasm. The enzyme catalyses ATP + H2O + cellular proteinSide 1 = ADP + phosphate + cellular proteinSide 2.. Part of the Sec protein translocase complex. Interacts with the SecYEG preprotein conducting channel. Has a central role in coupling the hydrolysis of ATP to the transfer of proteins into and across the cell membrane, serving both as a receptor for the preprotein-SecB complex and as an ATP-driven molecular motor driving the stepwise translocation of polypeptide chains across the membrane. The protein is Protein translocase subunit SecA of Orientia tsutsugamushi (strain Boryong) (Rickettsia tsutsugamushi).